A 254-amino-acid polypeptide reads, in one-letter code: uncharacterized protein (254 aa).

The segment at 163–182 is disordered; sequence PNKHTQHKRSTRRTSPKDYN. The span at 166–176 shows a compositional bias: basic residues; sequence HTQHKRSTRRT. A helical membrane pass occupies residues 207–227; that stretch reads AHSAWILIIIIIIIVVILFFF.

It belongs to the RL11 family.

The protein localises to the host membrane. This is an uncharacterized protein from Human cytomegalovirus (strain Merlin) (HHV-5).